Reading from the N-terminus, the 56-residue chain is Large ribosomal subunit protein uL30 (56 aa).

Belongs to the universal ribosomal protein uL30 family. Part of the 50S ribosomal subunit.

This chain is Large ribosomal subunit protein uL30, found in Nitratidesulfovibrio vulgaris (strain ATCC 29579 / DSM 644 / CCUG 34227 / NCIMB 8303 / VKM B-1760 / Hildenborough) (Desulfovibrio vulgaris).